The chain runs to 216 residues: Sporozoite antigen (216 aa).

The segment at 194-216 (QQQQPSSYGAPPASSQQPSGFFW) is disordered.

The sequence is that of Sporozoite antigen from Eimeria tenella (Coccidian parasite).